Reading from the N-terminus, the 281-residue chain is Aminoglycoside N(3)-acetyltransferase IX (281 aa).

The protein belongs to the antibiotic N-acetyltransferase family.

The catalysed reaction is a 2-deoxystreptamine antibiotic + acetyl-CoA = an N(3)-acetyl-2-deoxystreptamine antibiotic + CoA + H(+). Its function is as follows. Resistance to neomycin. In Micromonospora chalcea, this protein is Aminoglycoside N(3)-acetyltransferase IX (aacC9).